The primary structure comprises 563 residues: Arginine--tRNA ligase (563 aa).

The short motif at 120 to 130 (PNIAKPFHVGH) is the 'HIGH' region element.

The protein belongs to the class-I aminoacyl-tRNA synthetase family. As to quaternary structure, monomer.

Its subcellular location is the cytoplasm. The enzyme catalyses tRNA(Arg) + L-arginine + ATP = L-arginyl-tRNA(Arg) + AMP + diphosphate. The protein is Arginine--tRNA ligase of Clostridium botulinum (strain Alaska E43 / Type E3).